Here is a 314-residue protein sequence, read N- to C-terminus: Torsin-2A (314 aa).

The first 19 residues, M1–G19, serve as a signal peptide directing secretion. G86–T93 is a binding site for ATP. 2 N-linked (GlcNAc...) asparagine glycosylation sites follow: N142 and N283.

It belongs to the ClpA/ClpB family. Torsin subfamily. In terms of assembly, homohexamer.

The protein localises to the endoplasmic reticulum lumen. The sequence is that of Torsin-2A (tor2a) from Xenopus laevis (African clawed frog).